We begin with the raw amino-acid sequence, 72 residues long: Large ribosomal subunit protein bL31 (72 aa).

Residues Cys16, Cys18, Cys38, and Cys41 each contribute to the Zn(2+) site.

This sequence belongs to the bacterial ribosomal protein bL31 family. Type A subfamily. Part of the 50S ribosomal subunit. Requires Zn(2+) as cofactor.

Its function is as follows. Binds the 23S rRNA. The polypeptide is Large ribosomal subunit protein bL31 (Beutenbergia cavernae (strain ATCC BAA-8 / DSM 12333 / CCUG 43141 / JCM 11478 / NBRC 16432 / NCIMB 13614 / HKI 0122)).